Reading from the N-terminus, the 376-residue chain is Putative glutamate--cysteine ligase 2-1 (376 aa).

Belongs to the glutamate--cysteine ligase type 2 family. YbdK subfamily.

The catalysed reaction is L-cysteine + L-glutamate + ATP = gamma-L-glutamyl-L-cysteine + ADP + phosphate + H(+). In terms of biological role, ATP-dependent carboxylate-amine ligase which exhibits weak glutamate--cysteine ligase activity. This chain is Putative glutamate--cysteine ligase 2-1, found in Mycobacterium sp. (strain KMS).